A 610-amino-acid chain; its full sequence is Elongation factor 4 (610 aa).

Positions 11–193 (EKIRNFSIIA…QIVEKVPAPT (183 aa)) constitute a tr-type G domain. GTP-binding positions include 23–28 (DHGKST) and 140–143 (NKID).

Belongs to the TRAFAC class translation factor GTPase superfamily. Classic translation factor GTPase family. LepA subfamily.

It is found in the cell membrane. It catalyses the reaction GTP + H2O = GDP + phosphate + H(+). Required for accurate and efficient protein synthesis under certain stress conditions. May act as a fidelity factor of the translation reaction, by catalyzing a one-codon backward translocation of tRNAs on improperly translocated ribosomes. Back-translocation proceeds from a post-translocation (POST) complex to a pre-translocation (PRE) complex, thus giving elongation factor G a second chance to translocate the tRNAs correctly. Binds to ribosomes in a GTP-dependent manner. The protein is Elongation factor 4 of Streptococcus pyogenes serotype M2 (strain MGAS10270).